The sequence spans 376 residues: MTETADPLNRPLKRGWTTGSCATAAARAAYELLMTGSCPAIVDIALPGGRRASFAVAIHEAEGGRATAGVVKDAGDDPDVTHGALIKATVQRRDAGSGIAFRAGSGVGTVTRPGLPLPPGEPAINPVPREMIIAAIDEAATALGGTRDVTVEIAIPGGEDLAKKTLNPRLGIVGGLSILGTTGIVVPFSCAAWIHSIYRGIDVARAAGLPHIAGATGSTSEKAVQQLYGLPDTALIDMGDFAGGMLKYLRRHPVGRVTVAGGFAKMTKLGQGLLDLHSRAGEVDLGWLATALHDAGAPPELVETARTANTALQVLQESDRSGFPAGDVVARAAWQTAYRALANDAVALDVAVFDRDGRLVGRCLGADHSPLPRNRR.

The protein belongs to the CbiD family.

It catalyses the reaction Co-precorrin-5B + S-adenosyl-L-methionine = Co-precorrin-6A + S-adenosyl-L-homocysteine. It participates in cofactor biosynthesis; adenosylcobalamin biosynthesis; cob(II)yrinate a,c-diamide from sirohydrochlorin (anaerobic route): step 6/10. In terms of biological role, catalyzes the methylation of C-1 in cobalt-precorrin-5B to form cobalt-precorrin-6A. The sequence is that of Cobalt-precorrin-5B C(1)-methyltransferase from Bradyrhizobium sp. (strain BTAi1 / ATCC BAA-1182).